The sequence spans 193 residues: Naphthalene 1,2-dioxygenase system, small oxygenase component (193 aa).

Belongs to the bacterial ring-hydroxylating dioxygenase beta subunit family. As to quaternary structure, the naphthalene dioxygenase (NDO) multicomponent enzyme system is composed of an electron transfer component and a dioxygenase component (iron sulfur protein (ISP)). The electron transfer component is composed of a ferredoxin reductase (NdoR) and a ferredoxin (NdoA), and the dioxygenase component is formed of a heterohexamer (trimer of heterodimers) of three large alpha subunits (NdoB) and three small beta subunits (NdoC).

It participates in aromatic compound metabolism; naphthalene degradation. In terms of biological role, component of the naphthalene dioxygenase (NDO) multicomponent enzyme system which catalyzes the incorporation of both atoms of molecular oxygen into naphthalene to form cis-(1R,2S)-dihydroxy-1,2-dihydronaphthalene. The beta subunit seems to have a structural role in the holoenzyme. The sequence is that of Naphthalene 1,2-dioxygenase system, small oxygenase component from Pseudomonas aeruginosa.